The sequence spans 341 residues: Protein quaking-A (341 aa).

In terms of domain architecture, KH spans 87–153 (FVPVKEYPDY…WEHLNEDLHV (67 aa)). The SH3-binding signature appears at 276 to 279 (PPTP). Positions 324 to 330 (RVHPYQR) match the Nuclear localization signal motif.

The protein belongs to the quaking family. As to quaternary structure, homodimer; does not require RNA to homodimerize.

It localises to the cytoplasm. Its subcellular location is the nucleus. RNA reader protein, which recognizes and binds specific RNAs, thereby regulating RNA metabolic processes, such as pre-mRNA splicing, circular RNA (circRNA) formation, mRNA export, mRNA stability and/or translation. Involved in various cellular processes, such as mRNA storage into stress granules, apoptosis, interferon response, glial cell fate and development. Binds to the 5'-NACUAAY-N(1,20)-UAAY-3' RNA core sequence. Acts as a mRNA modification reader that specifically recognizes and binds mRNA transcripts modified by internal N(7)-methylguanine (m7G). Promotes the formation of circular RNAs (circRNAs): acts by binding to sites flanking circRNA-forming exons. CircRNAs are produced by back-splicing circularization of pre-mRNAs. Required to protect and promote stability of mRNAs which promotes oligodendrocyte differentiation. Acts as an important regulator of muscle development: required during early skeletal myofibril formation by regulating the accumulation of the muscle-specific tropomyosin-3 (tpm3) transcripts. This chain is Protein quaking-A, found in Danio rerio (Zebrafish).